Consider the following 495-residue polypeptide: Phosphomethylpyrimidine synthase (495 aa).

Substrate is bound by residues Asn125, Met154, Tyr183, His219, 239 to 241, 280 to 283, and Glu319; these read SRG and DGLR. His323 serves as a coordination point for Zn(2+). Position 346 (Tyr346) interacts with substrate. His387 serves as a coordination point for Zn(2+). The [4Fe-4S] cluster site is built by Cys467, Cys470, and Cys475.

It belongs to the ThiC family. It depends on [4Fe-4S] cluster as a cofactor.

The catalysed reaction is 5-amino-1-(5-phospho-beta-D-ribosyl)imidazole + S-adenosyl-L-methionine = 4-amino-2-methyl-5-(phosphooxymethyl)pyrimidine + CO + 5'-deoxyadenosine + formate + L-methionine + 3 H(+). The protein operates within cofactor biosynthesis; thiamine diphosphate biosynthesis. Its function is as follows. Catalyzes the synthesis of the hydroxymethylpyrimidine phosphate (HMP-P) moiety of thiamine from aminoimidazole ribotide (AIR) in a radical S-adenosyl-L-methionine (SAM)-dependent reaction. In Leptospira interrogans serogroup Icterohaemorrhagiae serovar copenhageni (strain Fiocruz L1-130), this protein is Phosphomethylpyrimidine synthase.